We begin with the raw amino-acid sequence, 315 residues long: BTB/POZ domain-containing adapter for CUL3-mediated RhoA degradation protein 3 (315 aa).

Residue methionine 1 is modified to N-acetylmethionine. Residue serine 23 is modified to Phosphoserine. The BTB domain occupies 32 to 100; that stretch reads KYVKLNVGGA…LRDGAVPLPE (69 aa). Residues 239 to 245 carry the Interaction with PCNA motif; that stretch reads QTKVEFP. Positions 269–294 are disordered; that stretch reads NALLEATGGAAGRSHHLDEDEERERE.

It belongs to the BACURD family. As to quaternary structure, homotetramer; forms a two-fold symmetric tetramer in solution. Interacts with CUL3; interaction is direct and forms a 5:5 heterodecamer. Component of the BCR(BACURD3) E3 ubiquitin ligase complex, at least composed of CUL3, KCTD10/BACURD3 and RBX1. Interacts with DNA polymerase delta subunit 2/POLD2. Interacts with PCNA. In terms of tissue distribution, expressed at highest levels in lung. Also detected in testis and heart. Very low expression, if any, in brain, liver, spleen, kidney and skeletal muscle.

The protein resides in the nucleus. It participates in protein modification; protein ubiquitination. Functionally, substrate-specific adapter of a BCR (BTB-CUL3-RBX1) E3 ubiquitin-protein ligase complex. The BCR(BACURD3) E3 ubiquitin ligase complex mediates the ubiquitination of target proteins, leading to their degradation by the proteasome. This chain is BTB/POZ domain-containing adapter for CUL3-mediated RhoA degradation protein 3 (Kctd10), found in Rattus norvegicus (Rat).